The primary structure comprises 544 residues: Chaperonin GroEL (544 aa).

ATP contacts are provided by residues 29–32 (TLGP), lysine 50, 86–90 (DGTTT), glycine 413, 479–481 (DAA), and aspartate 495.

Belongs to the chaperonin (HSP60) family. Forms a cylinder of 14 subunits composed of two heptameric rings stacked back-to-back. Interacts with the co-chaperonin GroES.

It is found in the cytoplasm. It catalyses the reaction ATP + H2O + a folded polypeptide = ADP + phosphate + an unfolded polypeptide.. Its function is as follows. Together with its co-chaperonin GroES, plays an essential role in assisting protein folding. The GroEL-GroES system forms a nano-cage that allows encapsulation of the non-native substrate proteins and provides a physical environment optimized to promote and accelerate protein folding. The protein is Chaperonin GroEL of Borrelia turicatae (strain 91E135).